Consider the following 366-residue polypeptide: tRNA/tmRNA (uracil-C(5))-methyltransferase (366 aa).

S-adenosyl-L-methionine is bound by residues Gln189, Tyr217, Asn222, Glu238, and Asp298. Catalysis depends on Cys323, which acts as the Nucleophile. Residue Glu357 is the Proton acceptor of the active site.

It belongs to the class I-like SAM-binding methyltransferase superfamily. RNA M5U methyltransferase family. TrmA subfamily.

It catalyses the reaction uridine(54) in tRNA + S-adenosyl-L-methionine = 5-methyluridine(54) in tRNA + S-adenosyl-L-homocysteine + H(+). The catalysed reaction is uridine(341) in tmRNA + S-adenosyl-L-methionine = 5-methyluridine(341) in tmRNA + S-adenosyl-L-homocysteine + H(+). Dual-specificity methyltransferase that catalyzes the formation of 5-methyluridine at position 54 (m5U54) in all tRNAs, and that of position 341 (m5U341) in tmRNA (transfer-mRNA). The protein is tRNA/tmRNA (uracil-C(5))-methyltransferase of Idiomarina loihiensis (strain ATCC BAA-735 / DSM 15497 / L2-TR).